The primary structure comprises 489 residues: Ribulose bisphosphate carboxylase large chain (489 aa).

Positions 128 and 178 each coordinate substrate. Residue Lys180 is the Proton acceptor of the active site. Lys182 is a substrate binding site. The Mg(2+) site is built by Lys206, Asp208, and Glu209. Lys206 is subject to N6-carboxylysine. The active-site Proton acceptor is His298. The substrate site is built by Arg299, His331, and Ser383.

This sequence belongs to the RuBisCO large chain family. Type I subfamily. Heterohexadecamer of 8 large chains and 8 small chains. Mg(2+) is required as a cofactor.

It carries out the reaction 2 (2R)-3-phosphoglycerate + 2 H(+) = D-ribulose 1,5-bisphosphate + CO2 + H2O. It catalyses the reaction D-ribulose 1,5-bisphosphate + O2 = 2-phosphoglycolate + (2R)-3-phosphoglycerate + 2 H(+). Functionally, ruBisCO catalyzes two reactions: the carboxylation of D-ribulose 1,5-bisphosphate, the primary event in carbon dioxide fixation, as well as the oxidative fragmentation of the pentose substrate. Both reactions occur simultaneously and in competition at the same active site. This chain is Ribulose bisphosphate carboxylase large chain, found in Nitrosospira sp. (strain 40KI).